The chain runs to 1161 residues: Hamartin (1161 aa).

Lysine 30 participates in a covalent cross-link: Glycyl lysine isopeptide (Lys-Gly) (interchain with G-Cter in ubiquitin). Disordered regions lie at residues 296 to 336 and 353 to 591; these read PYVD…PSTR and CGMT…QRGV. Positions 303 to 336 are enriched in low complexity; sequence SYGGSTSTPSSSSRLMLFSPPGQLPQSLSSPSTR. Pro residues predominate over residues 393–402; sequence TSPPPAPPCP. Positions 403 to 784 are mediates interaction with WDR45B; it reads QDDCVHGSAA…QIRQLQHDRE (382 aa). A compositionally biased stretch (basic and acidic residues) spans 471 to 484; it reads EKDKEEAAISKELS. 6 positions are modified to phosphoserine: serine 484, serine 502, serine 508, serine 518, serine 592, and serine 595. A compositionally biased stretch (polar residues) spans 509 to 529; the sequence is LSGSQRKTHSAASGTQGSSVN. Coiled coils occupy residues 721–849, 879–917, and 967–991; these read IRAA…NRQL, TAYR…AKKD, and EKDG…ERLD. Disordered regions lie at residues 1003–1077 and 1092–1161; these read GHNE…SLPS and NKSE…PEHS. The segment covering 1004–1017 has biased composition (basic and acidic residues); the sequence is HNEEASGHNGETRT. Residues 1026–1043 show a composition bias toward low complexity; that stretch reads SCGGRVTGGSSSSSSELS. Polar residues predominate over residues 1064 to 1077; it reads PSSSIPTTVGSLPS. Serine 1094 carries the post-translational modification Phosphoserine. A compositionally biased stretch (low complexity) spans 1103–1113; it reads VTMSSSSLSET. Basic and acidic residues-rich tracts occupy residues 1114 to 1124 and 1152 to 1161; these read LKTELGKDSGT and DYNETHPEHS.

Component of the TSC-TBC complex (also named Rhebulator complex), composed of 2 molecules of TSC1, 2 molecules of TSC2 and 1 molecule of TBC1D7. Probably forms a complex composed of chaperones HSP90 and HSP70, co-chaperones STIP1/HOP, CDC37, PPP5C, PTGES3/p23, TSC1 and client protein TSC2. Forms a complex composed of chaperones HSP90 and HSP70, co-chaperones CDC37, PPP5C, TSC1 and client protein TSC2, CDK4, AKT, RAF1 and NR3C1; this complex does not contain co-chaperones STIP1/HOP and PTGES3/p23. Forms a complex containing HSP90AA1, TSC1 and TSC2; TSC1 is required to recruit TCS2 to the complex. Interacts (via C-terminus) with the closed form of HSP90AA1 (via the middle domain and TPR repeat-binding motif). Interacts with DOCK7. Interacts with FBXW5. Interacts with WDR45B. Interacts with RPAP3 and URI1. In terms of processing, phosphorylation at Ser-502 does not affect interaction with TSC2. 'Lys-63'-linked ubiquitinated at Lys-30 by PELI1; the ubiquitination promotes TSC1/TSC2 complex stability.

The protein resides in the lysosome membrane. Its subcellular location is the cytoplasm. It is found in the cytosol. In terms of biological role, non-catalytic component of the TSC-TBC complex, a multiprotein complex that acts as a negative regulator of the canonical mTORC1 complex, an evolutionarily conserved central nutrient sensor that stimulates anabolic reactions and macromolecule biosynthesis to promote cellular biomass generation and growth. The TSC-TBC complex acts as a GTPase-activating protein (GAP) for the small GTPase RHEB, a direct activator of the protein kinase activity of mTORC1. In absence of nutrients, the TSC-TBC complex inhibits mTORC1, thereby preventing phosphorylation of ribosomal protein S6 kinase (RPS6KB1 and RPS6KB2) and EIF4EBP1 (4E-BP1) by the mTORC1 signaling. The TSC-TBC complex is inactivated in response to nutrients, relieving inhibition of mTORC1. Within the TSC-TBC complex, TSC1 stabilizes TSC2 and prevents TSC2 self-aggregation. Involved in microtubule-mediated protein transport via its ability to regulate mTORC1 signaling. Also acts as a co-chaperone for HSP90AA1 facilitating HSP90AA1 chaperoning of protein clients such as kinases, TSC2 and glucocorticoid receptor NR3C1. Increases ATP binding to HSP90AA1 and inhibits HSP90AA1 ATPase activity. Competes with the activating co-chaperone AHSA1 for binding to HSP90AA1, thereby providing a reciprocal regulatory mechanism for chaperoning of client proteins. Recruits TSC2 to HSP90AA1 and stabilizes TSC2 by preventing the interaction between TSC2 and ubiquitin ligase HERC1. This is Hamartin from Mus musculus (Mouse).